Consider the following 270-residue polypeptide: Formamidopyrimidine-DNA glycosylase (270 aa).

Pro2 acts as the Schiff-base intermediate with DNA in catalysis. Glu3 serves as the catalytic Proton donor. Lys58 (proton donor; for beta-elimination activity) is an active-site residue. Positions 91, 110, and 151 each coordinate DNA. The segment at 236 to 270 (FVYGRGGENCKVCGTGLREIKLGQRASVYCPRCQS) adopts an FPG-type zinc-finger fold. Catalysis depends on Arg260, which acts as the Proton donor; for delta-elimination activity.

The protein belongs to the FPG family. Monomer. Zn(2+) is required as a cofactor.

It catalyses the reaction Hydrolysis of DNA containing ring-opened 7-methylguanine residues, releasing 2,6-diamino-4-hydroxy-5-(N-methyl)formamidopyrimidine.. The catalysed reaction is 2'-deoxyribonucleotide-(2'-deoxyribose 5'-phosphate)-2'-deoxyribonucleotide-DNA = a 3'-end 2'-deoxyribonucleotide-(2,3-dehydro-2,3-deoxyribose 5'-phosphate)-DNA + a 5'-end 5'-phospho-2'-deoxyribonucleoside-DNA + H(+). Its function is as follows. Involved in base excision repair of DNA damaged by oxidation or by mutagenic agents. Acts as a DNA glycosylase that recognizes and removes damaged bases. Has a preference for oxidized purines, such as 7,8-dihydro-8-oxoguanine (8-oxoG). Has AP (apurinic/apyrimidinic) lyase activity and introduces nicks in the DNA strand. Cleaves the DNA backbone by beta-delta elimination to generate a single-strand break at the site of the removed base with both 3'- and 5'-phosphates. In Pseudomonas fluorescens (strain ATCC BAA-477 / NRRL B-23932 / Pf-5), this protein is Formamidopyrimidine-DNA glycosylase.